A 212-amino-acid chain; its full sequence is uncharacterized protein (212 aa).

This is an uncharacterized protein from Saccharolobus islandicus (Sulfolobus islandicus).